The following is a 92-amino-acid chain: Conotoxin Mr15.3 (92 aa).

The N-terminal stretch at 1-20 (MSTLKMMLLILLLLLPMATF) is a signal peptide. A propeptide spanning residues 21-53 (DSDGQAIPGGGIPSAVNSRVRGDEKSGRSLEKR) is cleaved from the precursor.

It belongs to the conotoxin N superfamily. Contains 4 disulfide bonds. As to expression, expressed by the venom duct.

It is found in the secreted. This chain is Conotoxin Mr15.3, found in Conus marmoreus (Marble cone).